The following is a 413-amino-acid chain: Serpin A12 (413 aa).

The first 20 residues, 1 to 20 (MTRMLDLGLFLAGLLTVKGL), serve as a signal peptide directing secretion. 2 N-linked (GlcNAc...) asparagine glycosylation sites follow: Asn92 and Asn267. Positions 364–382 (GMEGAAGSGAQTLPMETPR) are reactive center loop.

This sequence belongs to the serpin family. As to quaternary structure, forms a stable complex with KLK7. Glycosylation slightly decreases affinity for heparin, but otherwise has no significant effect on KLK7 inhibitory activity or thermal stability of the protein. Expressed in visceral adipose tissues.

The protein localises to the secreted. Inhibition of KLK7 is enhanced by heparin. In terms of biological role, adipokine that modulates insulin action by specifically inhibiting its target protease KLK7 in white adipose tissues. This chain is Serpin A12 (Serpina12), found in Mus musculus (Mouse).